We begin with the raw amino-acid sequence, 1222 residues long: ATP-dependent helicase/nuclease subunit A (1222 aa).

The UvrD-like helicase ATP-binding domain occupies 39–495 (QKRTAQQIEA…ILLKENFRSQ (457 aa)). 60–67 (ASAGSGKT) is a binding site for ATP. The UvrD-like helicase C-terminal domain occupies 524–810 (QLIAGSHAQT…NLMTIHKSKG (287 aa)).

Belongs to the helicase family. AddA subfamily. Heterodimer of AddA and AddB/RexB. Mg(2+) serves as cofactor.

It catalyses the reaction Couples ATP hydrolysis with the unwinding of duplex DNA by translocating in the 3'-5' direction.. The enzyme catalyses ATP + H2O = ADP + phosphate + H(+). In terms of biological role, the heterodimer acts as both an ATP-dependent DNA helicase and an ATP-dependent, dual-direction single-stranded exonuclease. Recognizes the chi site generating a DNA molecule suitable for the initiation of homologous recombination. The AddA nuclease domain is required for chi fragment generation; this subunit has the helicase and 3' -&gt; 5' nuclease activities. The sequence is that of ATP-dependent helicase/nuclease subunit A from Streptococcus pyogenes serotype M49 (strain NZ131).